We begin with the raw amino-acid sequence, 633 residues long: DEAD-box ATP-dependent RNA helicase 37 (633 aa).

The tract at residues 1 to 110 is disordered; the sequence is MSASWADVAD…WNNRSGGWDR (110 aa). The residue at position 2 (Ser-2) is an N-acetylserine. Residues 11-25 are compositionally biased toward polar residues; it reads SENTGSGSSNQNSHP. 2 stretches are compositionally biased toward gly residues: residues 68 to 80 and 87 to 101; these read GGSG…GGGY and PGSG…GGGW. Residues 159–187 carry the Q motif motif; that stretch reads NTFAEIDLGEALNLNIRRCKYVKPTPVQR. The 185-residue stretch at 190 to 374 folds into the Helicase ATP-binding domain; the sequence is IPILLEGRDL…ADFLANYIFL (185 aa). Residue 203–210 coordinates ATP; that stretch reads AQTGSGKT. Residues 318–321 carry the DEAD box motif; the sequence is DEAD. Positions 401–552 constitute a Helicase C-terminal domain; it reads HLMDLLHAQR…EVPEWLTRYA (152 aa). A disordered region spans residues 555 to 600; sequence SSFGGGKNRRSGGRFGGRDFRREGSFGSGRGGYGGGGGGYGGGGGY. Positions 580-600 are enriched in gly residues; the sequence is FGSGRGGYGGGGGGYGGGGGY.

The protein belongs to the DEAD box helicase family. DDX3/DED1 subfamily.

The enzyme catalyses ATP + H2O = ADP + phosphate + H(+). This is DEAD-box ATP-dependent RNA helicase 37 (RH37) from Arabidopsis thaliana (Mouse-ear cress).